A 215-amino-acid chain; its full sequence is Transmembrane protein 267 (215 aa).

A run of 3 helical transmembrane segments spans residues 77–97, 114–134, and 178–198; these read FGEIILAGFLASVIDIDHFLL, FLHCSTVIPTVVLTLKFTMHF, and FWLYVIITSSLPHICSFVMYF.

The protein resides in the membrane. This Bos taurus (Bovine) protein is Transmembrane protein 267 (TMEM267).